The chain runs to 600 residues: Proline--tRNA ligase (600 aa).

Belongs to the class-II aminoacyl-tRNA synthetase family. ProS type 1 subfamily. Homodimer.

It is found in the cytoplasm. It carries out the reaction tRNA(Pro) + L-proline + ATP = L-prolyl-tRNA(Pro) + AMP + diphosphate. Catalyzes the attachment of proline to tRNA(Pro) in a two-step reaction: proline is first activated by ATP to form Pro-AMP and then transferred to the acceptor end of tRNA(Pro). As ProRS can inadvertently accommodate and process non-cognate amino acids such as alanine and cysteine, to avoid such errors it has two additional distinct editing activities against alanine. One activity is designated as 'pretransfer' editing and involves the tRNA(Pro)-independent hydrolysis of activated Ala-AMP. The other activity is designated 'posttransfer' editing and involves deacylation of mischarged Ala-tRNA(Pro). The misacylated Cys-tRNA(Pro) is not edited by ProRS. This Prochlorococcus marinus (strain MIT 9215) protein is Proline--tRNA ligase.